The following is a 129-amino-acid chain: Large-conductance mechanosensitive channel (129 aa).

Helical transmembrane passes span 10–30 (FAVK…GAFG) and 70–90 (AVML…VIAI).

The protein belongs to the MscL family. As to quaternary structure, homopentamer.

The protein resides in the cell inner membrane. In terms of biological role, channel that opens in response to stretch forces in the membrane lipid bilayer. May participate in the regulation of osmotic pressure changes within the cell. In Actinobacillus pleuropneumoniae serotype 3 (strain JL03), this protein is Large-conductance mechanosensitive channel.